The primary structure comprises 305 residues: Uridylate cyclase (305 aa).

Asp58 and Asp102 together coordinate Mn(2+).

Belongs to the adenylyl cyclase class-4/guanylyl cyclase family. Pyrimidine cyclase subfamily. In terms of assembly, homodimer. Mn(2+) is required as a cofactor.

The protein resides in the cytoplasm. The catalysed reaction is GTP = 3',5'-cyclic GMP + diphosphate. It carries out the reaction UTP = 3',5'-cyclic UMP + diphosphate. Pycsar (pyrimidine cyclase system for antiphage resistance) provides immunity against bacteriophage. The pyrimidine cyclase (PycC) synthesizes cyclic nucleotides in response to infection; these serve as specific second messenger signals. The signals activate the adjacent effector, leading to bacterial cell death and abortive phage infection. A clade D Pycsar system. In terms of biological role, the pyrimidine cyclase gene of a two-gene Pycsar system, generates cyclic UMP (cUMP) from UTP as well as cGMP from GTP to a lesser extent, has little to no activity on ATP or CTP. Expression of this and adjacent effector MePycTM (AC A0A1C5G2D0) probably confers resistance to bacteriophage. The genes are probably only expressed in response to bacteriophage infection. This Micromonospora echinofusca protein is Uridylate cyclase.